The sequence spans 1010 residues: Trifunctional purine biosynthetic protein adenosine-3 (1010 aa).

Alanine 2 is modified (N-acetylalanine). Phosphoserine is present on serine 10. An ATP-grasp domain is found at 111–318 (KEFMDRHEIP…LYEVMQSTLD (208 aa)). ATP contacts are provided by residues 190-193 (EEFL), glutamate 197, arginine 220, and asparagine 229. Glutamate 288 and asparagine 290 together coordinate Mg(2+). Lysine 350 carries the post-translational modification N6-acetyllysine. Residues 434–809 (GLTYKDSGVD…NFPVQQKKAR (376 aa)) are AIRS domain. Serine 440 and serine 467 each carry phosphoserine. Threonine 682 bears the Phosphothreonine mark. The segment at 810–1010 (VAVLISGTGS…DGKIHWAKEQ (201 aa)) is GART domain. N(1)-(5-phospho-beta-D-ribosyl)glycinamide is bound at residue 818-820 (GSN). Residues arginine 871, 896–899 (MRIL), and asparagine 913 each bind (6R)-10-formyltetrahydrofolate. Histidine 915 (proton donor) is an active-site residue. Residue 947-951 (AEDVD) participates in (6R)-10-formyltetrahydrofolate binding. A N(1)-(5-phospho-beta-D-ribosyl)glycinamide-binding site is contributed by 977–980 (KVAE).

It in the N-terminal section; belongs to the GARS family. The protein in the central section; belongs to the AIR synthase family. This sequence in the C-terminal section; belongs to the GART family. In terms of assembly, homodimer. Mg(2+) serves as cofactor. It depends on Mn(2+) as a cofactor. In terms of tissue distribution, detected in liver, kidney and brain.

It catalyses the reaction 5-phospho-beta-D-ribosylamine + glycine + ATP = N(1)-(5-phospho-beta-D-ribosyl)glycinamide + ADP + phosphate + H(+). The enzyme catalyses 2-formamido-N(1)-(5-O-phospho-beta-D-ribosyl)acetamidine + ATP = 5-amino-1-(5-phospho-beta-D-ribosyl)imidazole + ADP + phosphate + H(+). It carries out the reaction N(1)-(5-phospho-beta-D-ribosyl)glycinamide + (6R)-10-formyltetrahydrofolate = N(2)-formyl-N(1)-(5-phospho-beta-D-ribosyl)glycinamide + (6S)-5,6,7,8-tetrahydrofolate + H(+). Its pathway is purine metabolism; IMP biosynthesis via de novo pathway; 5-amino-1-(5-phospho-D-ribosyl)imidazole from N(2)-formyl-N(1)-(5-phospho-D-ribosyl)glycinamide: step 2/2. The protein operates within purine metabolism; IMP biosynthesis via de novo pathway; N(1)-(5-phospho-D-ribosyl)glycinamide from 5-phospho-alpha-D-ribose 1-diphosphate: step 2/2. It functions in the pathway purine metabolism; IMP biosynthesis via de novo pathway; N(2)-formyl-N(1)-(5-phospho-D-ribosyl)glycinamide from N(1)-(5-phospho-D-ribosyl)glycinamide (10-formyl THF route): step 1/1. Trifunctional enzyme that catalyzes three distinct reactions as part of the 'de novo' inosine monophosphate biosynthetic pathway. This Mus musculus (Mouse) protein is Trifunctional purine biosynthetic protein adenosine-3 (Gart).